The sequence spans 512 residues: Acid-sensing ion channel 2 (512 aa).

Residues M1 to P37 are Cytoplasmic-facing. Phosphoserine occurs at positions 8 and 11. Residues L38–V58 form a helical membrane-spanning segment. Over E59–A427 the chain is Extracellular. Intrachain disulfides connect C92/C193, C289/C364, C307/C360, C311/C358, C320/C342, and C322/C334. 2 N-linked (GlcNAc...) asparagine glycosylation sites follow: N365 and N392. A helical transmembrane segment spans residues L428–L448. Residues G441–S443 carry the GAS motif; ion selectivity filter motif. Topologically, residues E449–C512 are cytoplasmic.

It belongs to the amiloride-sensitive sodium channel (TC 1.A.6) family. ASIC2 subfamily. In terms of assembly, can form homotrimers. Heterotrimer; forms functional heterotrimers producing channel with different properties. Forms heterotrimers with ASIC1; while ASIC1 determines current amplitude, ASIC2 influences the properties of the current. Forms heterotrimers with ASIC3; resulting in channels with distinct properties. Interacts with STOM; STOM regulates the gating of ASIC2-containing channels. Interacts with PICK1; promotes ASIC3 phosphorylation by PKC and activation of ASIC2/ASIC3 heterotrimers. In terms of tissue distribution, expressed by sensory neurons. Expressed by nociceptive sensory neurons, spiral ganglion (SG) neurons and the retina (at protein level). Expressed in outer nuclear layer of retina (photoreceptors) and to a lower extent in distal and proximal inner nuclear layer.

The protein resides in the cell membrane. The enzyme catalyses Na(+)(in) = Na(+)(out). It catalyses the reaction K(+)(in) = K(+)(out). It carries out the reaction Li(+)(in) = Li(+)(out). Inhibited by the diuretic drug amiloride. In terms of biological role, forms pH-gated trimeric sodium channels that act as postsynaptic excitatory sensors in the nervous system. Upon extracellular acidification, these channels generate rapid, transient inward currents that fully desensitize. Highly selective for sodium, they are permeable to other cations. By forming heterotrimeric channels with ASIC1, could contribute to synaptic plasticity, learning, and memory. Additionally, as acid sensors at nerve terminals, plays a role in mechanosensation and phototransduction. Functionally, has no pH-gated sodium channel activity per se but can associate with other ASICs to produce functional channels with specific properties. The chain is Acid-sensing ion channel 2 from Mus musculus (Mouse).